Here is a 266-residue protein sequence, read N- to C-terminus: Glucosamine-6-phosphate deaminase (266 aa).

Asp-67 functions as the Proton acceptor; for enolization step in the catalytic mechanism. Residue Asn-139 is the For ring-opening step of the active site. The active-site Proton acceptor; for ring-opening step is the His-141. Catalysis depends on Glu-146, which acts as the For ring-opening step.

It belongs to the glucosamine/galactosamine-6-phosphate isomerase family. NagB subfamily. In terms of assembly, homohexamer.

The enzyme catalyses alpha-D-glucosamine 6-phosphate + H2O = beta-D-fructose 6-phosphate + NH4(+). Its pathway is amino-sugar metabolism; N-acetylneuraminate degradation; D-fructose 6-phosphate from N-acetylneuraminate: step 5/5. Catalyzes the reversible isomerization-deamination of glucosamine 6-phosphate (GlcN6P) to form fructose 6-phosphate (Fru6P) and ammonium ion. This is Glucosamine-6-phosphate deaminase from Marinomonas sp. (strain MWYL1).